An 87-amino-acid chain; its full sequence is MKFSLACLLALAGLQAALADPATCEKEAQFVKQELIGQPYTDAVANALQSNPIRVLHPGDMITMEYIASRLNIQVNENNEIISAHCA.

A signal peptide spans 1–19; the sequence is MKFSLACLLALAGLQAALA. A disulfide bond links cysteine 24 and cysteine 86.

The protein localises to the secreted. Elastase inhibitor. The polypeptide is Elastase inhibitor AFLEI (Aspergillus fumigatus (strain CBS 144.89 / FGSC A1163 / CEA10) (Neosartorya fumigata)).